We begin with the raw amino-acid sequence, 387 residues long: Alpha-maltose-1-phosphate synthase (387 aa).

Belongs to the glycosyltransferase group 1 family.

The catalysed reaction is ADP-alpha-D-glucose + alpha-D-glucose 1-phosphate = alpha-maltose 1-phosphate + ADP + H(+). Its pathway is glycan biosynthesis; glycogen biosynthesis. Involved in the biosynthesis of the maltose-1-phosphate (M1P) building block required for alpha-glucan production by the key enzyme GlgE. Catalyzes the formation of an alpha-1,4 linkage between glucose from ADP-glucose and glucose 1-phosphate (G1P) to yield maltose-1-phosphate (M1P). This Mycolicibacterium smegmatis (strain ATCC 700084 / mc(2)155) (Mycobacterium smegmatis) protein is Alpha-maltose-1-phosphate synthase.